The following is a 640-amino-acid chain: Biosynthetic arginine decarboxylase (640 aa).

K105 bears the N6-(pyridoxal phosphate)lysine mark. A substrate-binding site is contributed by F290–Y300.

This sequence belongs to the Orn/Lys/Arg decarboxylase class-II family. SpeA subfamily. The cofactor is Mg(2+). Requires pyridoxal 5'-phosphate as cofactor.

It carries out the reaction L-arginine + H(+) = agmatine + CO2. In terms of biological role, catalyzes the biosynthesis of agmatine from arginine. This chain is Biosynthetic arginine decarboxylase, found in Vibrio cholerae serotype O1 (strain ATCC 39315 / El Tor Inaba N16961).